A 230-amino-acid chain; its full sequence is Ribonuclease 3 (230 aa).

In terms of domain architecture, RNase III spans 5 to 125; sequence YSRFYNILGY…VIGAIYLDSD (121 aa). A Mg(2+)-binding site is contributed by Glu40. The active site involves Asp44. Mg(2+) contacts are provided by Asp111 and Glu114. The active site involves Glu114. In terms of domain architecture, DRBM spans 153 to 223; that stretch reads DSKSKLQEIL…AEKMIEMLSQ (71 aa).

This sequence belongs to the ribonuclease III family. In terms of assembly, homodimer. The cofactor is Mg(2+).

It localises to the cytoplasm. It catalyses the reaction Endonucleolytic cleavage to 5'-phosphomonoester.. Functionally, digests double-stranded RNA. Involved in the processing of primary rRNA transcript to yield the immediate precursors to the large and small rRNAs (23S and 16S). Processes some mRNAs, and tRNAs when they are encoded in the rRNA operon. Processes pre-crRNA and tracrRNA of type II CRISPR loci if present in the organism. This is Ribonuclease 3 from Francisella tularensis subsp. tularensis (strain WY96-3418).